We begin with the raw amino-acid sequence, 637 residues long: Threonine--tRNA ligase (637 aa).

The TGS domain maps to 1 to 61 (MLNITLPDCS…VEDSAVQIIT (61 aa)). The segment at 242-533 (DHRKLGKQLD…LIENHAGSFP (292 aa)) is catalytic. Zn(2+) contacts are provided by Cys333, His384, and His510.

It belongs to the class-II aminoacyl-tRNA synthetase family. In terms of assembly, homodimer. The cofactor is Zn(2+).

The protein resides in the cytoplasm. It catalyses the reaction tRNA(Thr) + L-threonine + ATP = L-threonyl-tRNA(Thr) + AMP + diphosphate + H(+). Its function is as follows. Catalyzes the attachment of threonine to tRNA(Thr) in a two-step reaction: L-threonine is first activated by ATP to form Thr-AMP and then transferred to the acceptor end of tRNA(Thr). Also edits incorrectly charged L-seryl-tRNA(Thr). This is Threonine--tRNA ligase from Neisseria gonorrhoeae (strain ATCC 700825 / FA 1090).